The primary structure comprises 255 residues: H-2 class II histocompatibility antigen, E-D alpha chain (255 aa).

A signal peptide spans Met-1 to Ala-25. The interval Ile-26 to Asn-109 is alpha-1. The Extracellular portion of the chain corresponds to Ile-26–Glu-216. The tract at residues Val-110–Trp-203 is alpha-2. In terms of domain architecture, Ig-like C1-type spans Pro-112–Glu-204. A disulfide bond links Cys-132 and Cys-188. N-linked (GlcNAc...) asparagine glycosylation occurs at Asn-143. The connecting peptide stretch occupies residues Glu-204 to Glu-216. A helical membrane pass occupies residues Asn-217–Ile-242. At Lys-243–Leu-255 the chain is on the cytoplasmic side.

The protein belongs to the MHC class II family.

It localises to the membrane. In Mus musculus (Mouse), this protein is H-2 class II histocompatibility antigen, E-D alpha chain (H2-Ea).